The primary structure comprises 322 residues: HPr kinase/phosphorylase (322 aa).

Active-site residues include histidine 146 and lysine 167. 161–168 contributes to the ATP binding site; it reads GDSGLGKS. Serine 168 is a Mg(2+) binding site. Aspartate 185 (proton acceptor; for phosphorylation activity. Proton donor; for dephosphorylation activity) is an active-site residue. Residues 209-218 are important for the catalytic mechanism of both phosphorylation and dephosphorylation; it reads LEVRGLGLLD. Glutamate 210 serves as a coordination point for Mg(2+). Residue arginine 250 is part of the active site. An important for the catalytic mechanism of dephosphorylation region spans residues 271 to 276; it reads QVAAGR.

The protein belongs to the HPrK/P family. In terms of assembly, homohexamer. The cofactor is Mg(2+).

It carries out the reaction [HPr protein]-L-serine + ATP = [HPr protein]-O-phospho-L-serine + ADP + H(+). The catalysed reaction is [HPr protein]-O-phospho-L-serine + phosphate + H(+) = [HPr protein]-L-serine + diphosphate. Catalyzes the ATP- as well as the pyrophosphate-dependent phosphorylation of a specific serine residue in HPr, a phosphocarrier protein of the phosphoenolpyruvate-dependent sugar phosphotransferase system (PTS). HprK/P also catalyzes the pyrophosphate-producing, inorganic phosphate-dependent dephosphorylation (phosphorolysis) of seryl-phosphorylated HPr (P-Ser-HPr). The sequence is that of HPr kinase/phosphorylase from Paraburkholderia phymatum (strain DSM 17167 / CIP 108236 / LMG 21445 / STM815) (Burkholderia phymatum).